The following is a 367-amino-acid chain: tRNA-specific 2-thiouridylase MnmA (367 aa).

ATP-binding positions include 11 to 18 (AMSGGVDS) and Met-37. Residues 97-99 (NPD) form an interaction with target base in tRNA region. Cys-102 functions as the Nucleophile in the catalytic mechanism. A disulfide bond links Cys-102 and Cys-199. ATP is bound at residue Gly-127. The interval 149–151 (KDQ) is interaction with tRNA. Cys-199 acts as the Cysteine persulfide intermediate in catalysis. An interaction with tRNA region spans residues 311 to 312 (RY).

This sequence belongs to the MnmA/TRMU family. In terms of assembly, interacts with TusE.

The protein resides in the cytoplasm. It carries out the reaction S-sulfanyl-L-cysteinyl-[protein] + uridine(34) in tRNA + AH2 + ATP = 2-thiouridine(34) in tRNA + L-cysteinyl-[protein] + A + AMP + diphosphate + H(+). Functionally, catalyzes the 2-thiolation of uridine at the wobble position (U34) of tRNA(Lys), tRNA(Glu) and tRNA(Gln), leading to the formation of s(2)U34, the first step of tRNA-mnm(5)s(2)U34 synthesis. Sulfur is provided by IscS, via a sulfur-relay system. Binds ATP and its substrate tRNAs. The protein is tRNA-specific 2-thiouridylase MnmA of Buchnera aphidicola subsp. Schizaphis graminum (strain Sg).